A 212-amino-acid polypeptide reads, in one-letter code: Small ribosomal subunit protein uS4c (212 aa).

Positions 89-152 (MRLDNIIFRL…RSRALVDKNL (64 aa)) constitute an S4 RNA-binding domain.

The protein belongs to the universal ribosomal protein uS4 family. As to quaternary structure, part of the 30S ribosomal subunit. Contacts protein S5. The interaction surface between S4 and S5 is involved in control of translational fidelity.

Its subcellular location is the plastid. The protein resides in the chloroplast. In terms of biological role, one of the primary rRNA binding proteins, it binds directly to 16S rRNA where it nucleates assembly of the body of the 30S subunit. Functionally, with S5 and S12 plays an important role in translational accuracy. This chain is Small ribosomal subunit protein uS4c (rps4), found in Staurastrum punctulatum (Green alga).